An 88-amino-acid polypeptide reads, in one-letter code: HssA/B-like protein 17 (88 aa).

Belongs to the hssA/B family.

This Dictyostelium discoideum (Social amoeba) protein is HssA/B-like protein 17 (hssl17).